A 292-amino-acid polypeptide reads, in one-letter code: MMRIALFLLTNLAVMLVFGLVLSLTGIQSSSVQGLMIMAGLFGFGGSFVSLLMSKWMALRSVGGEVIEQPRNETENWLLETVRRQSQQAGIAMPQVAIYHAPDINAFATGARRNASLVAVSTGLLQSMSRDEAEAVIAHEISHVANGDMVTMTLIQGIVNTFVIFISRLIAQAAAGFLGNRDGEGEGNGNPMIYFGVSMVLELVFGILASIITMWFSRHREFYADAGSAKLVGREKMIAALQRLKTSYEPQEAGNMMAFCINGKSKSFSELFMSHPPLDKRIEALRSGQYLK.

2 helical membrane-spanning segments follow: residues 4-24 (IALF…VLSL) and 34-54 (GLMI…LLMS). His139 provides a ligand contact to Zn(2+). Glu140 is an active-site residue. His143 serves as a coordination point for Zn(2+). Helical transmembrane passes span 158–178 (IVNT…AGFL) and 192–212 (MIYF…ASII). Glu221 is a Zn(2+) binding site.

The protein belongs to the peptidase M48B family. Zn(2+) serves as cofactor.

It is found in the cell inner membrane. The protein is Protease HtpX of Serratia proteamaculans (strain 568).